Consider the following 336-residue polypeptide: MKLAVIGGDGIGPEVTAEALKVLDAVLPGVDKTEYDLGARRYHATGELLPDSVIDELRAHDAILLGAIGDPSVPSGVLERGLLLRLRFELDHHINLRPGRLYPGVSSPLAGNPDIDFVVVREGTEGPYTGTGGAIRVGTPNEVATEVSQNTAFGVRRVVVDAFERARRRRKHLTLVHKTNVLTFAGKLWSRIVAEVGRDYPDVEVAYQHIDAATIFMVTDPGRFDVIVTDNLFGDIITDLSAAVCGGIGLAASGNIDGTRTNPSMFEPVHGSAPDIAGQGIADPTAAIMSVALLLAHLGEDAAATRVDRAVERYLATRGNERPATTEVGERIAAAL.

Substrate is bound by residues R87, R97, R121, and D211. Residues D211, D235, and D239 each contribute to the Mg(2+) site. 271 to 283 is an NAD(+) binding site; sequence GSAPDIAGQGIAD.

The protein belongs to the isocitrate and isopropylmalate dehydrogenases family. LeuB type 2 subfamily. Homodimer. The cofactor is Mg(2+). Mn(2+) is required as a cofactor.

The protein localises to the cytoplasm. The catalysed reaction is (2R,3S)-3-isopropylmalate + NAD(+) = 4-methyl-2-oxopentanoate + CO2 + NADH. Its pathway is amino-acid biosynthesis; L-leucine biosynthesis; L-leucine from 3-methyl-2-oxobutanoate: step 3/4. Its function is as follows. Catalyzes the oxidation of 3-carboxy-2-hydroxy-4-methylpentanoate (3-isopropylmalate) to 3-carboxy-4-methyl-2-oxopentanoate. The product decarboxylates to 4-methyl-2 oxopentanoate. The sequence is that of 3-isopropylmalate dehydrogenase from Mycolicibacterium paratuberculosis (strain ATCC BAA-968 / K-10) (Mycobacterium paratuberculosis).